The following is a 165-amino-acid chain: uncharacterized protein (165 aa).

In terms of domain architecture, RCK C-terminal spans 76–161 (LEQVESALDD…LKRLIREKLT (86 aa)).

This is an uncharacterized protein from Bacillus subtilis (strain 168).